The following is a 364-amino-acid chain: Palmitoyltransferase ZDHHC9 (364 aa).

Residues 1–35 (MSVMVVRKKVTRKWEKLPGRNTFCCDGRVMMARQK) lie on the Cytoplasmic side of the membrane. A helical membrane pass occupies residues 36-56 (GIFYLTLFLILGTCTLFFAFE). Residues 57-63 (CRYLAVQ) lie on the Lumenal side of the membrane. A helical membrane pass occupies residues 64–84 (QSPAIPVFAAMLFLFSMATLL). The Cytoplasmic portion of the chain corresponds to 85–183 (RASFSDPGVI…NCVGKRNYRY (99 aa)). One can recognise a DHHC domain in the interval 139 to 189 (KYCYTCKIFRPPRASHCSICDNCVERFDHHCPWVGNCVGKRNYRYFYLFIL). Cys169 (S-palmitoyl cysteine intermediate) is an active-site residue. Residues 184-204 (FYLFILSLSLLTIYVFAFNIV) traverse the membrane as a helical segment. Topologically, residues 205 to 228 (YVALKSLKIGFLETLKETPGTVLE) are lumenal. A helical transmembrane segment spans residues 229 to 249 (VLICFFTLWSVVGLTGFHTFL). Residues 250–364 (VALNQTTNED…PPQEAAEAEK (115 aa)) are Cytoplasmic-facing. Residues 303–364 (PLEESGSRPP…PPQEAAEAEK (62 aa)) are disordered. A compositionally biased stretch (polar residues) spans 310 to 323 (RPPSTQETSSSLLP). Positions 346–356 (EMPPPEPPEPP) are enriched in pro residues.

It belongs to the DHHC palmitoyltransferase family. ERF2/ZDHHC9 subfamily. As to quaternary structure, interacts with GOLGA7.

Its subcellular location is the endoplasmic reticulum membrane. The protein resides in the golgi apparatus membrane. It catalyses the reaction L-cysteinyl-[protein] + hexadecanoyl-CoA = S-hexadecanoyl-L-cysteinyl-[protein] + CoA. In terms of biological role, palmitoyltransferase that catalyzes the addition of palmitate onto various protein substrates, such as ADRB2, GSDMD, HRAS, NRAS and CGAS. The ZDHHC9-GOLGA7 complex is a palmitoyltransferase specific for HRAS and NRAS. May have a palmitoyltransferase activity toward the beta-2 adrenergic receptor/ADRB2 and therefore regulate G protein-coupled receptor signaling. Acts as a regulator of innate immunity by catalyzing palmitoylation of CGAS, thereby promoting CGAS homodimerization and cyclic GMP-AMP synthase activity. Activates pyroptosis by catalyzing palmitoylation of gasdermin-D (GSDMD), thereby promoting membrane translocation and pore formation of GSDMD. The protein is Palmitoyltransferase ZDHHC9 (ZDHHC9) of Pongo abelii (Sumatran orangutan).